A 179-amino-acid polypeptide reads, in one-letter code: MNQLDLIKSSIKSIPNYPKVGIIFRDITSLLENPTAFKASIDAIVAEFKNKGITKVVGTESRGFIFGAPVALALGLPFVLVRKPHKLPRAVISQSYALEYGEDTLEMHLDSINQDDNVLVVDDLLATGGTIDATAKLIRQLGGQVKNAAFVIGLPDLGGKARLEQIGIKSFTLVEFDGH.

The protein belongs to the purine/pyrimidine phosphoribosyltransferase family. Homodimer.

The protein resides in the cytoplasm. It catalyses the reaction AMP + diphosphate = 5-phospho-alpha-D-ribose 1-diphosphate + adenine. It participates in purine metabolism; AMP biosynthesis via salvage pathway; AMP from adenine: step 1/1. Catalyzes a salvage reaction resulting in the formation of AMP, that is energically less costly than de novo synthesis. This Haemophilus ducreyi (strain 35000HP / ATCC 700724) protein is Adenine phosphoribosyltransferase.